The primary structure comprises 299 residues: Very long chain fatty acid elongase 5 (299 aa).

Met1 is subject to N-acetylmethionine. 7 consecutive transmembrane segments (helical) span residues Trp26 to Val46, Ile64 to Val84, Val112 to Leu132, Ile139 to Met158, Phe168 to Ser187, Gly205 to Cys225, and Phe227 to Thr247. The segment at Val274 to Asp299 is disordered. Residues Gly279–Asn289 are compositionally biased toward polar residues.

It belongs to the ELO family. ELOVL5 subfamily. Interacts with TECR.

Its subcellular location is the endoplasmic reticulum membrane. It is found in the cell projection. It localises to the dendrite. The enzyme catalyses a very-long-chain acyl-CoA + malonyl-CoA + H(+) = a very-long-chain 3-oxoacyl-CoA + CO2 + CoA. The catalysed reaction is (6Z,9Z,12Z)-octadecatrienoyl-CoA + malonyl-CoA + H(+) = (8Z,11Z,14Z)-3-oxoeicosatrienoyl-CoA + CO2 + CoA. It catalyses the reaction (9Z,12Z,15Z)-octadecatrienoyl-CoA + malonyl-CoA + H(+) = (11Z,14Z,17Z)-3-oxoeicosatrienoyl-CoA + CO2 + CoA. It carries out the reaction (9Z)-hexadecenoyl-CoA + malonyl-CoA + H(+) = 3-oxo-(11Z)-octadecenoyl-CoA + CO2 + CoA. The enzyme catalyses (9Z)-octadecenoyl-CoA + malonyl-CoA + H(+) = 3-oxo-(11Z)-eicosenoyl-CoA + CO2 + CoA. The catalysed reaction is (11Z)-octadecenoyl-CoA + malonyl-CoA + H(+) = 3-oxo-(13Z)-eicosenoyl-CoA + CO2 + CoA. It catalyses the reaction (9Z,12Z)-octadecadienoyl-CoA + malonyl-CoA + H(+) = (11Z,14Z)-3-oxoicosa-11,14-dienoyl-CoA + CO2 + CoA. It carries out the reaction (6Z,9Z,12Z,15Z)-octadecatetraenoyl-CoA + malonyl-CoA + H(+) = (8Z,11Z,14Z,17Z)-3-oxoicosatetraenoyl-CoA + CO2 + CoA. The enzyme catalyses (5Z,8Z,11Z,14Z)-eicosatetraenoyl-CoA + malonyl-CoA + H(+) = (7Z,10Z,13Z,16Z)-3-oxodocosatetraenoyl-CoA + CO2 + CoA. The catalysed reaction is (5Z,8Z,11Z,14Z,17Z)-eicosapentaenoyl-CoA + malonyl-CoA + H(+) = 3-oxo-(7Z,10Z,13Z,16Z,19Z)-docosapentaenoyl-CoA + CO2 + CoA. Its pathway is lipid metabolism; polyunsaturated fatty acid biosynthesis. Catalyzes the first and rate-limiting reaction of the four reactions that constitute the long-chain fatty acids elongation cycle. This endoplasmic reticulum-bound enzymatic process allows the addition of 2 carbons to the chain of long- and very long-chain fatty acids (VLCFAs) per cycle. Condensing enzyme that acts specifically toward polyunsaturated acyl-CoA with the higher activity toward C18:3(n-6) acyl-CoA. May participate in the production of monounsaturated and of polyunsaturated VLCFAs of different chain lengths that are involved in multiple biological processes as precursors of membrane lipids and lipid mediators. In conditions where the essential linoleic and alpha linoleic fatty acids are lacking it is also involved in the synthesis of Mead acid from oleic acid. The polypeptide is Very long chain fatty acid elongase 5 (Mus musculus (Mouse)).